The sequence spans 831 residues: MNMEQEDDQVPAVAAETVPLKRYVTNPGANRDEEVAAAPSSQDTPYFDYAYERSLRHQDAKFLAMNGTQNGRDGLPSKSPRRPSVSASTVRNSDDVNHSKAGPGSGKLLNDTLQSKISSIHMPHVQQGDNAVVSSVGGPETDPGNMETTDPLFSDELAEIYLSIHKCMDMRHKYIRVSLQGELDNPIDDDSWIIYPDCKEGEDDTGLFNFADCKIPGIENEMEYHMDHQGIFQVYENDSAYIAGTPSFHIPTIRDYYIDLEFLLSASSDGPSKSFSFRRLQYLEGRWNMYMLLNEYQELADTKKVPHRDFYNVRKVDTHVHHSALANQKHLLRFIKAKLRKCPNEKVIWRDGKFLTLQEVFDSLKLTSYDLSIDTLDMHAHTDTFHRFDKFNLKYNPIGESRLRTIFLKTDNDINGRYLAELTKEVFTDLRTQKYQMAEYRISIYGRNREEWDKLAAWIIDNELFSPNVRWLIQVPRLYDVYKKSGIVETFEEVVRNVFEPLFEVTKDPRTHPKLHVFLQRVIGFDSVDDESKPERRTFRKFPYPKHWDINLNPPYSYWLYYMYANMTSLNSWRKIRGFNTFVLRPHCGEAGDTDHLASAFLLSHGINHGILLRKVPFLQYLWYLDQIPIAMSPLSNNALFLAYDKNPFLTYFKRGLNVSLSTDDPLQFAFTREPLIEEYAVAAQIYKLSAVDMCELARNSVLQSGFERQLKERWLGVDFQDIDRTNVPIIRLAYRALTLTQEIALVNKHVQPSKHPSNHDLEELIHKYDAMTGTSDPLSASPRTNDATISSRLSLHDGHDHGAFFPGLSVISERRRRKDSMASSSQDLKD.

3 disordered regions span residues 26–45 (NPGANRDEEVAAAPSSQDTP), 66–110 (NGTQ…KLLN), and 130–149 (NAVVSSVGGPETDPGNMETT). Serine 79 and serine 84 each carry phosphoserine. Residues histidine 319 and histidine 321 each coordinate Zn(2+). Substrate is bound by residues histidine 321 and 390-395 (KFNLKY). Residue histidine 587 participates in Zn(2+) binding. Substrate is bound at residue glutamate 590. The Proton acceptor role is filled by histidine 609. Aspartate 664 is a binding site for Zn(2+). 665–668 (DPLQ) serves as a coordination point for substrate. Residues serine 758, serine 776, serine 780, and serine 782 each carry the phosphoserine modification.

The protein belongs to the metallo-dependent hydrolases superfamily. Adenosine and AMP deaminases family. In terms of assembly, homotetramer. The cofactor is Zn(2+).

Its subcellular location is the cytoplasm. It catalyses the reaction AMP + H2O + H(+) = IMP + NH4(+). It participates in purine metabolism; IMP biosynthesis via salvage pathway; IMP from AMP: step 1/1. AMP deaminase plays a critical role in energy metabolism. This chain is AMP deaminase (ada1), found in Schizosaccharomyces pombe (strain 972 / ATCC 24843) (Fission yeast).